The following is a 24-amino-acid chain: Bombinin (24 aa).

Asn-24 carries the asparagine amide modification.

This sequence belongs to the bombinin family. Expressed by the skin glands.

Its subcellular location is the secreted. Functionally, has antimicrobial and hemolytic activities. The protein is Bombinin of Bombina variegata (Yellow-bellied toad).